A 341-amino-acid polypeptide reads, in one-letter code: MADFFMTNLWPLIVVIGQSVLLIVVLLISIAYILLADRKIWAAVQIRRGPNVVGPWGLLQSFADLLKMILKEPMIPSGANKGVFLLAPLVTCVLALSAWAVIPVSAGWVIADINVGVLYILAVSSLSVYGIIMAGWSSNSKYPFLAALRSAAQMVSYEVSIGFVIICVLLCVGSLNLTAIVQAQNSQWGVLGWYWLPLFPMFVVFYVSALAETNRPPFDLVEAESELVAGFMVEYSSTPYMLFVLGEYVAIVTMCAMGTILFLGGWLPPVPYAPFTWVPGIVWFALKVLFMFFMFAMAKAIVPRYRYDQLMRLGWKVFLPLSLAMVVIVAAVLQFAGLAPK.

Transmembrane regions (helical) follow at residues 13 to 33 (IVVI…IAYI), 82 to 102 (GVFL…WAVI), 115 to 135 (VGVL…IMAG), 161 to 181 (IGFV…TAIV), 190 to 210 (VLGW…VSAL), 242 to 262 (LFVL…TILF), 277 to 297 (WVPG…MFAM), and 317 to 337 (VFLP…QFAG).

It belongs to the complex I subunit 1 family. In terms of assembly, NDH-1 is composed of 14 different subunits. Subunits NuoA, H, J, K, L, M, N constitute the membrane sector of the complex.

The protein resides in the cell inner membrane. The enzyme catalyses a quinone + NADH + 5 H(+)(in) = a quinol + NAD(+) + 4 H(+)(out). Its function is as follows. NDH-1 shuttles electrons from NADH, via FMN and iron-sulfur (Fe-S) centers, to quinones in the respiratory chain. The immediate electron acceptor for the enzyme in this species is believed to be ubiquinone. Couples the redox reaction to proton translocation (for every two electrons transferred, four hydrogen ions are translocated across the cytoplasmic membrane), and thus conserves the redox energy in a proton gradient. This subunit may bind ubiquinone. This Rhodopseudomonas palustris (strain HaA2) protein is NADH-quinone oxidoreductase subunit H 2.